The chain runs to 246 residues: Probable transcriptional regulatory protein CGSHiEE_01480 (246 aa).

It belongs to the TACO1 family.

The protein localises to the cytoplasm. The protein is Probable transcriptional regulatory protein CGSHiEE_01480 of Haemophilus influenzae (strain PittEE).